The sequence spans 166 residues: UPF0251 protein UNCMA_27150 (166 aa).

This sequence belongs to the UPF0251 family.

This chain is UPF0251 protein UNCMA_27150, found in Methanocella arvoryzae (strain DSM 22066 / NBRC 105507 / MRE50).